The following is a 163-amino-acid chain: Nucleotide-binding protein KPN78578_03700 (163 aa).

It belongs to the YajQ family.

Its function is as follows. Nucleotide-binding protein. This is Nucleotide-binding protein KPN78578_03700 from Klebsiella pneumoniae subsp. pneumoniae (strain ATCC 700721 / MGH 78578).